Here is a 190-residue protein sequence, read N- to C-terminus: Threonylcarbamoyl-AMP synthase (190 aa).

Residues 7-190 form the YrdC-like domain; it reads RAALSDVLQA…ALTGKQFRQG (184 aa).

Belongs to the SUA5 family. TsaC subfamily.

The protein resides in the cytoplasm. It catalyses the reaction L-threonine + hydrogencarbonate + ATP = L-threonylcarbamoyladenylate + diphosphate + H2O. Its function is as follows. Required for the formation of a threonylcarbamoyl group on adenosine at position 37 (t(6)A37) in tRNAs that read codons beginning with adenine. Catalyzes the conversion of L-threonine, HCO(3)(-)/CO(2) and ATP to give threonylcarbamoyl-AMP (TC-AMP) as the acyladenylate intermediate, with the release of diphosphate. The sequence is that of Threonylcarbamoyl-AMP synthase from Yersinia enterocolitica serotype O:8 / biotype 1B (strain NCTC 13174 / 8081).